The chain runs to 222 residues: Triosephosphate isomerase (222 aa).

Substrate is bound at residue 10–12 (NCK). His-93 acts as the Electrophile in catalysis. Residue Glu-141 is the Proton acceptor of the active site. Substrate is bound by residues Ile-146, Gly-180, and 201-202 (AS).

It belongs to the triosephosphate isomerase family. As to quaternary structure, homotetramer; dimer of dimers.

It localises to the cytoplasm. The catalysed reaction is D-glyceraldehyde 3-phosphate = dihydroxyacetone phosphate. It participates in carbohydrate biosynthesis; gluconeogenesis. It functions in the pathway carbohydrate degradation; glycolysis; D-glyceraldehyde 3-phosphate from glycerone phosphate: step 1/1. Its function is as follows. Involved in the gluconeogenesis. Catalyzes stereospecifically the conversion of dihydroxyacetone phosphate (DHAP) to D-glyceraldehyde-3-phosphate (G3P). The chain is Triosephosphate isomerase from Cenarchaeum symbiosum (strain A).